The following is a 161-amino-acid chain: Cyclic pyranopterin monophosphate synthase (161 aa).

Residues Leu-75–His-77 and Met-113–Glu-114 contribute to the substrate site. Residue Asp-128 is part of the active site.

The protein belongs to the MoaC family. As to quaternary structure, homohexamer; trimer of dimers.

It carries out the reaction (8S)-3',8-cyclo-7,8-dihydroguanosine 5'-triphosphate = cyclic pyranopterin phosphate + diphosphate. It functions in the pathway cofactor biosynthesis; molybdopterin biosynthesis. Functionally, catalyzes the conversion of (8S)-3',8-cyclo-7,8-dihydroguanosine 5'-triphosphate to cyclic pyranopterin monophosphate (cPMP). This is Cyclic pyranopterin monophosphate synthase from Edwardsiella ictaluri (strain 93-146).